The chain runs to 724 residues: MDTSGHFHDSGVGDLDEDPKCPCPSSGDEQQQQQPPPPPPPPAPPAAPQQPPGPPLQPQPLQLQQQQQQQQQQPPHPLSQLAQLQSQPVHPGLLHSSPTAFRAPPSSNSTAILHPSSRQGSQLNLNDHLLGHSPSSTATSGPGGGGRHRQASPLVHRRDSNPFTEIAMSSCKYSGGVMKPLSRLSASRRNLIEAEPEGQPLQLFSPSNPPEIIISSREDNHAHQTLLHHPNATHNHQHAGTTASSTTFPKANKRKNQNIGYKLGHRRALFEKRKRLSDYALIFGMFGIVVMVIETELSWGLYSKDSMFSLALKCLISLSTIILLGLIIAYHTREVQLFVIDNGADDWRIAMTYERILYISLEMLVCAIHPIPGEYKFFWTARLAFSYTPSRAEADVDIILSIPMFLRLYLIARVMLLHSKLFTDASSRSIGALNKINFNTRFVMKTLMTICPGTVLLVFSISLWIIAAWTVRVCERYHDQQDVTSNFLGAMWLISITFLSIGYGDMVPHTYCGKGVCLLTGIMGAGCTALVVAVVARKLELTKAEKHVHNFMMDTQLTKRIKNAAANVLRETWLIYKHTKLLKKIDHAKVRKHQRKFLQAIHQLRSVKMEQRKLSDQANTLVDLSKMQNVMYDLITELNDRSEDLEKQIGSLESKLEHLTASFNSLPLLIADTLRQQQQQLLSALMEARGVSVAVGTTHTPLSDSPIGVSSTSFPTPYTSSSSC.

Residues 1–11 are compositionally biased toward basic and acidic residues; the sequence is MDTSGHFHDSG. Disordered regions lie at residues 1–161 and 232–251; these read MDTS…RDSN and ATHNHQHAGTTASSTTFPKA. The span at 34 to 58 shows a compositional bias: pro residues; the sequence is QPPPPPPPPAPPAAPQQPPGPPLQP. Residues 59–88 are compositionally biased toward low complexity; the sequence is QPLQLQQQQQQQQQQPPHPLSQLAQLQSQP. The span at 105-125 shows a compositional bias: polar residues; sequence PSSNSTAILHPSSRQGSQLNL. Over residues 131-140 the composition is skewed to low complexity; sequence GHSPSSTATS. At Ser160 the chain carries Phosphoserine. Polar residues predominate over residues 232–249; sequence ATHNHQHAGTTASSTTFP. Residues 281–301 traverse the membrane as a helical segment; it reads LIFGMFGIVVMVIETELSWGL. The helical transmembrane segment at 308 to 328 threads the bilayer; it reads FSLALKCLISLSTIILLGLII. A helical transmembrane segment spans residues 359-379; the sequence is ISLEMLVCAIHPIPGEYKFFW. A helical transmembrane segment spans residues 398–418; it reads IILSIPMFLRLYLIARVMLLH. The chain crosses the membrane as a helical span at residues 447–467; the sequence is LMTICPGTVLLVFSISLWIIA. The segment at residues 487 to 507 is an intramembrane region (pore-forming); that stretch reads FLGAMWLISITFLSIGYGDMV. A helical transmembrane segment spans residues 516–536; the sequence is VCLLTGIMGAGCTALVVAVVA. The calmodulin-binding stretch occupies residues 554 to 630; it reads DTQLTKRIKN…LVDLSKMQNV (77 aa). The stretch at 635–662 forms a coiled coil; sequence ITELNDRSEDLEKQIGSLESKLEHLTAS. A disordered region spans residues 702 to 724; the sequence is LSDSPIGVSSTSFPTPYTSSSSC. Residues 710–724 show a composition bias toward low complexity; it reads SSTSFPTPYTSSSSC.

The protein belongs to the potassium channel KCNN family. KCa2.3/KCNN3 subfamily. As to quaternary structure, homodimer. Heteromultimer with KCNN2 or KCNN1; this modulates plasma membrane expression and consequently the small conductance calcium-activated potassium channel activity. The complex is composed of 4 channel subunits each of which binds to a calmodulin subunit which regulates the channel activity through calcium-binding. Interacts with CALM1.

Its subcellular location is the cell membrane. It localises to the cytoplasm. It is found in the myofibril. The protein resides in the sarcomere. The protein localises to the z line. It catalyses the reaction K(+)(in) = K(+)(out). Its activity is regulated as follows. Inhibited by bee venom neurotoxin apamin. Small conductance calcium-activated potassium channel that mediates the voltage-independent transmembrane transfer of potassium across the cell membrane through a constitutive interaction with calmodulin which binds the intracellular calcium allowing its opening. The current is characterized by a voltage-independent activation, an intracellular calcium concentration increase-dependent activation and a single-channel conductance of 10 picosiemens. Also presents an inwardly rectifying current, thus reducing its already small outward conductance of potassium ions, which is particularly the case when the membrane potential displays positive values, above + 20 mV. Activation is followed by membrane hyperpolarization. Thought to regulate neuronal excitability by contributing to the slow component of synaptic afterhyperpolarization. The chain is Small conductance calcium-activated potassium channel protein 3 from Sus scrofa (Pig).